Reading from the N-terminus, the 197-residue chain is Putative peptidyl-prolyl cis-trans isomerase (197 aa).

In terms of domain architecture, PPIase cyclophilin-type spans 14-195 (NEIKLIMHTN…HDITIDSIEI (182 aa)).

Belongs to the cyclophilin-type PPIase family.

It carries out the reaction [protein]-peptidylproline (omega=180) = [protein]-peptidylproline (omega=0). In terms of biological role, PPIases accelerate the folding of proteins. It catalyzes the cis-trans isomerization of proline imidic peptide bonds in oligopeptides. The chain is Putative peptidyl-prolyl cis-trans isomerase from Staphylococcus saprophyticus subsp. saprophyticus (strain ATCC 15305 / DSM 20229 / NCIMB 8711 / NCTC 7292 / S-41).